Here is a 793-residue protein sequence, read N- to C-terminus: Splicing factor 3A subunit 1 (793 aa).

A disordered region spans residues 1 to 43; sequence MPAGPVQAVPPPPPVPTEPKQPTEEEASSKEDSAPSKPVVGII. The segment covering 8–19 has biased composition (pro residues); that stretch reads AVPPPPPVPTEP. A Glycyl lysine isopeptide (Lys-Gly) (interchain with G-Cter in SUMO2) cross-link involves residue Lys-20. Residues 21–34 show a composition bias toward basic and acidic residues; that stretch reads QPTEEEASSKEDSA. Residues 52–94 form an SURP motif 1 repeat; the sequence is IVDKTASFVARNGPEFEARIRQNEINNPKFNFLNPNDPYHAYY. At Lys-55 the chain carries N6-acetyllysine. A Glycyl lysine isopeptide (Lys-Gly) (interchain with G-Cter in SUMO2) cross-link involves residue Lys-131. The SURP motif 2 repeat unit spans residues 166–208; the sequence is VVKLTAQFVARNGRQFLTQLMQKEQRNYQFDFLRPQHSLFNYF. Positions 318-428 are disordered; sequence GESEEVEMEV…KIPASKMQEH (111 aa). Phosphoserine is present on residues Ser-320, Ser-329, and Ser-359. Composition is skewed to acidic residues over residues 320–334 and 354–364; these read SEEVEMEVESDEEDD and DMDEGSDDEEE. Pro residues predominate over residues 368 to 384; sequence VPPPPETPMPPPLPPTP. Basic and acidic residues predominate over residues 388–397; that stretch reads IVRKDYDPKA. Position 413 is a phosphoserine (Ser-413). Residue Lys-424 forms a Glycyl lysine isopeptide (Lys-Gly) (interchain with G-Cter in SUMO2) linkage. The residue at position 451 (Ser-451) is a Phosphoserine. Position 456 is a phosphotyrosine (Tyr-456). A compositionally biased stretch (basic and acidic residues) spans 488–502; sequence IGEEEIQKPEEKVTW. 3 disordered regions span residues 488 to 518, 530 to 584, and 665 to 688; these read IGEEEIQKPEEKVTWDGHSGSMARTQQAAQA, HKAK…TMPP, and APMPPVHPPPPMEDEPTSKKLKTE. Residue Lys-499 forms a Glycyl lysine isopeptide (Lys-Gly) (interchain with G-Cter in SUMO2) linkage. Residue Ser-508 is modified to Phosphoserine. Residues 509–518 are compositionally biased toward polar residues; the sequence is MARTQQAAQA. A Glycyl lysine isopeptide (Lys-Gly) (interchain with G-Cter in SUMO2) cross-link involves residue Lys-542. The span at 665 to 675 shows a compositional bias: pro residues; sequence APMPPVHPPPP. A required and sufficient for nuclear import region spans residues 680–702; it reads PTSKKLKTEDSLMPEEEFLRRNK. Lys-686 is covalently cross-linked (Glycyl lysine isopeptide (Lys-Gly) (interchain with G-Cter in SUMO2)). The Ubiquitin-like domain maps to 707-793; sequence IKVQVPNMQD…ALKERGGRKK (87 aa). Tyr-759 is subject to Phosphotyrosine.

Component of the 17S U2 SnRNP complex, a ribonucleoprotein complex that contains small nuclear RNA (snRNA) U2 and a number of specific proteins. Part of the SF3A subcomplex of the 17S U2 SnRNP complex which is composed of three subunits; SF3A3/SAP61, SF3A2/SAP62 and SF3A1/SAP114. SF3A associates with the splicing factor SF3B and a 12S RNA unit to form the mature 17S U2 small nuclear ribonucleoprotein complex (17S U2 snRNP). SF3A1 functions as a scaffold that interacts directly with both SF3A2 and SF3A3. Identified in the spliceosome 'E' complex, a precursor of the spliceosome 'A' complex. Identified in the spliceosome 'A' and 'B' complexes. Identified in the spliceosome 'C' complex. Interacts with P2RX6; resulting in a reduction of the splicing activity. Ubiquitously expressed.

Its subcellular location is the nucleus. It localises to the nucleus speckle. Component of the 17S U2 SnRNP complex of the spliceosome, a large ribonucleoprotein complex that removes introns from transcribed pre-mRNAs. The 17S U2 SnRNP complex (1) directly participates in early spliceosome assembly and (2) mediates recognition of the intron branch site during pre-mRNA splicing by promoting the selection of the pre-mRNA branch-site adenosine, the nucleophile for the first step of splicing. Within the 17S U2 SnRNP complex, SF3A1 is part of the SF3A subcomplex that contributes to the assembly of the 17S U2 snRNP, and the subsequent assembly of the pre-spliceosome 'E' complex and the pre-catalytic spliceosome 'A' complex. Involved in pre-mRNA splicing as a component of pre-catalytic spliceosome 'B' complexes. This chain is Splicing factor 3A subunit 1 (SF3A1), found in Homo sapiens (Human).